The sequence spans 485 residues: GTPase Obg (485 aa).

Residues 2–159 form the Obg domain; sequence PRFVDRVVIH…RELTLELKTV (158 aa). Residues 160-341 enclose the OBG-type G domain; that stretch reads ADVGLIGFPS…FIFALWDMVR (182 aa). GTP is bound by residues 166–173, 191–195, 212–215, 292–295, and 322–324; these read GFPSAGKS, FTTLV, DVPG, NKID, and STV. 2 residues coordinate Mg(2+): serine 173 and threonine 193. Positions 359 to 437 constitute an OCT domain; that stretch reads PIAVDETGFS…IGDMTFDWEP (79 aa). The segment at 439–485 is disordered; it reads TPAGVDVQMSGRGTDTRLEQTDRVSAAERKIARRERRQSTDEPGGEE. Over residues 452–468 the composition is skewed to basic and acidic residues; sequence TDTRLEQTDRVSAAERK.

This sequence belongs to the TRAFAC class OBG-HflX-like GTPase superfamily. OBG GTPase family. As to quaternary structure, monomer. Requires Mg(2+) as cofactor.

The protein localises to the cytoplasm. Its function is as follows. An essential GTPase which binds GTP, GDP and possibly (p)ppGpp with moderate affinity, with high nucleotide exchange rates and a fairly low GTP hydrolysis rate. Plays a role in control of the cell cycle, stress response, ribosome biogenesis and in those bacteria that undergo differentiation, in morphogenesis control. The polypeptide is GTPase Obg (Mycobacterium sp. (strain MCS)).